Here is a 223-residue protein sequence, read N- to C-terminus: Large ribosomal subunit protein uL3 (223 aa).

A disordered region spans residues 137–157; that stretch reads GRASHGNSRSHNVPGSIGMAQ. Q157 carries the N5-methylglutamine modification.

This sequence belongs to the universal ribosomal protein uL3 family. As to quaternary structure, part of the 50S ribosomal subunit. Forms a cluster with proteins L14 and L19. In terms of processing, methylated by PrmB.

Its function is as follows. One of the primary rRNA binding proteins, it binds directly near the 3'-end of the 23S rRNA, where it nucleates assembly of the 50S subunit. This is Large ribosomal subunit protein uL3 from Burkholderia pseudomallei (strain 1106a).